We begin with the raw amino-acid sequence, 767 residues long: Golgin subfamily A member 1 (767 aa).

Positions 13–58 (TAVAQRPGGATRIPRSVSKESVASMGADSGDDFASDGSSSREDLSS) are disordered. Phosphoserine occurs at positions 30, 36, 41, 47, 50, and 51. Residues 50–657 (SSSREDLSSQ…RKTLQKELKI (608 aa)) are a coiled coil. One can recognise a GRIP domain in the interval 688–737 (TDAREINFEYLKHVVLKFMSCRESEAFHLIKAVSVLLNFSQEEENMLKET). The segment at 748–767 (KPAPKGSIRPSISNPRIPWS) is disordered.

Interacts with RAB6A. Directly interacts with TBC1D23. Interacts with FAM91A1; this interaction may be mediated by TBC1D23. Interacts with ARL1; this interaction recruits Golgin-97/GOLGA1 onto the Golgi apparatus. MARylated by PARP12; MARylation is required for basolateral export of E-Cadherin.

The protein localises to the golgi apparatus membrane. It localises to the golgi apparatus. The protein resides in the trans-Golgi network membrane. It is found in the cytoplasmic vesicle. Its subcellular location is the secretory vesicle. The protein localises to the acrosome. In terms of biological role, involved in vesicular trafficking at the Golgi apparatus level. Involved in endosome-to-Golgi trafficking. Mechanistically, captures transport vesicles arriving from endosomes via the protein TBC1D23. Recognized vesicles are then tethered to the trans-Golgi before subsequent SNARE engagement and vesicle fusion. Selectively regulates E-cadherin transport from the trans-Golgi network in tubulovesicular carriers. Its function is as follows. (Microbial infection) Plays an important role in poxvirus morphogenesis. Translocates into the viral factories where it may transport the membrane fragments and associated protein factors important for virus maturation to the sites of virion assembly. The sequence is that of Golgin subfamily A member 1 (GOLGA1) from Homo sapiens (Human).